Here is a 65-residue protein sequence, read N- to C-terminus: Large ribosomal subunit protein bL33c (65 aa).

It belongs to the bacterial ribosomal protein bL33 family.

It is found in the plastid. It localises to the chloroplast. The polypeptide is Large ribosomal subunit protein bL33c (Zygnema circumcarinatum (Green alga)).